The sequence spans 326 residues: Fructose-1,6-bisphosphatase class 1 (326 aa).

4 residues coordinate Mg(2+): glutamate 90, aspartate 111, leucine 113, and aspartate 114. Residues 114 to 117, tyrosine 222, and lysine 253 contribute to the substrate site; that span reads DGSS. Glutamate 259 serves as a coordination point for Mg(2+).

This sequence belongs to the FBPase class 1 family. In terms of assembly, homotetramer. It depends on Mg(2+) as a cofactor.

The protein resides in the cytoplasm. It catalyses the reaction beta-D-fructose 1,6-bisphosphate + H2O = beta-D-fructose 6-phosphate + phosphate. Its pathway is carbohydrate biosynthesis; gluconeogenesis. In Citrifermentans bemidjiense (strain ATCC BAA-1014 / DSM 16622 / JCM 12645 / Bem) (Geobacter bemidjiensis), this protein is Fructose-1,6-bisphosphatase class 1.